The primary structure comprises 564 residues: NAD-dependent malic enzyme (564 aa).

The active-site Proton donor is Tyr104. NAD(+) is bound at residue Arg157. Residue Lys175 is the Proton acceptor of the active site. Residues Glu246, Asp247, and Asp270 each coordinate a divalent metal cation. NAD(+)-binding residues include Asp270 and Asn417.

This sequence belongs to the malic enzymes family. As to quaternary structure, homotetramer. The cofactor is Mg(2+). Mn(2+) serves as cofactor.

The enzyme catalyses (S)-malate + NAD(+) = pyruvate + CO2 + NADH. The catalysed reaction is oxaloacetate + H(+) = pyruvate + CO2. This chain is NAD-dependent malic enzyme, found in Aeromonas salmonicida (strain A449).